The sequence spans 436 residues: Aminopeptidase C (436 aa).

Active-site residues include Cys68, His356, and Asn378.

The protein belongs to the peptidase C1 family. In terms of assembly, homohexamer.

It catalyses the reaction Inactivates bleomycin B2 (a cytotoxic glycometallopeptide) by hydrolysis of a carboxyamide bond of beta-aminoalanine, but also shows general aminopeptidase activity. The specificity varies somewhat with source, but amino acid arylamides of Met, Leu and Ala are preferred.. In terms of biological role, hydrolyzes naphthylamide-substituted amino acids as well as di- and tripeptides in which the half-cystine residue is involved in a disulfide loop, notably in oxytocin and vasopressin. Also has a bleomycin hydrolase activity. This Lactococcus lactis subsp. lactis (strain IL1403) (Streptococcus lactis) protein is Aminopeptidase C (pepC).